Here is a 181-residue protein sequence, read N- to C-terminus: Insulin-like growth factor 2 (181 aa).

Residues 1 to 24 (MGIPVGKSLLMLFTFLAFASCCIA) form the signal peptide. The interval 25–52 (AYRPSETLCGGELVDTLQFVCGDRGFYF) is b. Disulfide bonds link Cys33–Cys71, Cys45–Cys84, and Cys70–Cys75. The c stretch occupies residues 53 to 64 (SRPASRINRRSR). The segment at 65-85 (GIVEECCFRSCDLALLETYCA) is a. Residues 86–91 (TPAKSE) are d. The propeptide at 92–181 (RDVSTPPTVL…AFVEVSSDLQ (90 aa)) is e peptide. The O-linked (GalNAc...) threonine glycan is linked to Thr163.

The protein belongs to the insulin family. In terms of assembly, interacts with MYORG; this interaction is required for IGF2 secretion. Interacts with integrins ITGAV:ITGB3 and ITGA6:ITGB4; integrin-binding is required for IGF2 signaling. Interacts with IGFBP2. In terms of processing, proteolytically processed by PCSK4, proIGF2 is cleaved at Arg-128 and Arg-92 to generate big-IGF2 and mature IGF2.

Its subcellular location is the secreted. Its function is as follows. The insulin-like growth factors possess growth-promoting activity. Major fetal growth hormone in mammals. Plays a key role in regulating fetoplacental development. IGF2 is influenced by placental lactogen. Also involved in tissue differentiation. In adults, involved in glucose metabolism in adipose tissue, skeletal muscle and liver. Acts as a ligand for integrin which is required for IGF2 signaling. Positively regulates myogenic transcription factor MYOD1 function by facilitating the recruitment of transcriptional coactivators, thereby controlling muscle terminal differentiation. Inhibits myoblast differentiation and modulates metabolism via increasing the mitochondrial respiration rate. Preptin undergoes glucose-mediated co-secretion with insulin, and acts as a physiological amplifier of glucose-mediated insulin secretion. Exhibits osteogenic properties by increasing osteoblast mitogenic activity through phosphoactivation of MAPK1 and MAPK3. This chain is Insulin-like growth factor 2, found in Equus caballus (Horse).